A 248-amino-acid polypeptide reads, in one-letter code: UPF0736 protein BC_1176 (248 aa).

Belongs to the UPF0736 family.

This Bacillus cereus (strain ATCC 14579 / DSM 31 / CCUG 7414 / JCM 2152 / NBRC 15305 / NCIMB 9373 / NCTC 2599 / NRRL B-3711) protein is UPF0736 protein BC_1176.